The chain runs to 257 residues: Myosin-8 (257 aa).

Residues 1-257 (RAALQAEIEE…REVHTKISAE (257 aa)) are a coiled coil. Phosphoserine is present on residues Ser-33, Ser-45, and Ser-58.

As to quaternary structure, muscle myosin is a hexameric protein that consists of 2 heavy chain subunits (MHC), 2 alkali light chain subunits (MLC) and 2 regulatory light chain subunits (MLC-2).

It is found in the cytoplasm. The protein localises to the myofibril. In terms of biological role, muscle contraction. In Rattus norvegicus (Rat), this protein is Myosin-8 (Myh8).